Here is a 285-residue protein sequence, read N- to C-terminus: Gas vesicle protein C2 (285 aa).

Repeat copies occupy residues 22 to 52, 53 to 84, 85 to 122, 123 to 155, 156 to 188, and 189 to 220. Residues 22–220 are 6 X approximate tandem repeats; that stretch reads EAMDAYAEEF…ADDTTAQTDV (199 aa).

The protein belongs to the halobacterial gas vesicle GvpC family.

It is found in the gas vesicle. In terms of biological role, confers stability, involved in shaping gas vesicles (GV), hollow, gas filled proteinaceous nanostructures. GVs allow positioning of halobacteria at an optimal depth for growth in the poorly aerated, shallow brine pools of their habitat. Its function is as follows. Expression of 2 c-vac DNA fragments containing 2 divergently transcribed regions (gvpE-gvpF-gvpG-gvpH-gvpI-gvpJ-gvpK-gvpL-gvpM and gvpA-gvpC-gvpN-gvpO) allows H.volcanii to produce gas vesicles. This chain is Gas vesicle protein C2, found in Halobacterium salinarum (strain ATCC 700922 / JCM 11081 / NRC-1) (Halobacterium halobium).